Here is a 138-residue protein sequence, read N- to C-terminus: Small ribosomal subunit protein uS11B (138 aa).

The disordered stretch occupies residues 118-138 (DVTPVPSDSTRKKGGRRGRRL). Over residues 129–138 (KKGGRRGRRL) the composition is skewed to basic residues.

It belongs to the universal ribosomal protein uS11 family. In terms of assembly, component of the small ribosomal subunit (SSU). Mature yeast ribosomes consist of a small (40S) and a large (60S) subunit. The 40S small subunit contains 1 molecule of ribosomal RNA (18S rRNA) and 33 different proteins (encoded by 57 genes). The large 60S subunit contains 3 rRNA molecules (25S, 5.8S and 5S rRNA) and 46 different proteins (encoded by 81 genes). uS11 interacts with eS1 forming part of the mRNA exit tunnel. uS11 interacts with snoRNA U3. uS11 interacts with MPP10. Component of the ribosomal small subunit (SSU) processome composed of at least 40 protein subunits and snoRNA U3.

Its subcellular location is the cytoplasm. The protein localises to the nucleus. It is found in the nucleolus. Functionally, component of the ribosome, a large ribonucleoprotein complex responsible for the synthesis of proteins in the cell. The small ribosomal subunit (SSU) binds messenger RNAs (mRNAs) and translates the encoded message by selecting cognate aminoacyl-transfer RNA (tRNA) molecules. The large subunit (LSU) contains the ribosomal catalytic site termed the peptidyl transferase center (PTC), which catalyzes the formation of peptide bonds, thereby polymerizing the amino acids delivered by tRNAs into a polypeptide chain. The nascent polypeptides leave the ribosome through a tunnel in the LSU and interact with protein factors that function in enzymatic processing, targeting, and the membrane insertion of nascent chains at the exit of the ribosomal tunnel. uS11 is involved in nucleolar processing of pre-18S ribosomal RNA and ribosome assembly. This chain is Small ribosomal subunit protein uS11B, found in Saccharomyces cerevisiae (strain ATCC 204508 / S288c) (Baker's yeast).